The following is a 785-amino-acid chain: Transcription factor Sp1 (785 aa).

Residues 1-93 are disordered; it reads MSDQDHSMDE…PSQSGGTGEL (93 aa). At Ser2 the chain carries N-acetylserine. A phosphoserine mark is found at Ser2 and Ser7. Positions 2-82 are repressor domain; sequence SDQDHSMDEM…SPNENSNNSQ (81 aa). A Glycyl lysine isopeptide (Lys-Gly) (interchain with G-Cter in SUMO); alternate cross-link involves residue Lys16. A Glycyl lysine isopeptide (Lys-Gly) (interchain with G-Cter in SUMO2); alternate cross-link involves residue Lys16. Residues 20–34 show a composition bias toward gly residues; sequence GVGGNNGGNGNGGGA. Ser59 bears the Phosphoserine mark. Positions 72–85 are enriched in low complexity; that stretch reads ESPNENSNNSQGPS. Position 101 is a phosphoserine; by ATM (Ser101). Residues 109–123 show a composition bias toward polar residues; sequence IISSSSGATPTSKEQ. The tract at residues 109–141 is disordered; sequence IISSSSGATPTSKEQSGSSTNGSNGSESSKNRT. Residues 124 to 136 are compositionally biased toward low complexity; it reads SGSSTNGSNGSES. A transactivation domain A (Gln-rich) region spans residues 146 to 251; sequence QYVVAAAPNL…ANNVLSGQTQ (106 aa). The interval 261-495 is transactivation domain B (Gln-rich); the sequence is NGNITLLPVN…PMQGVSLGQT (235 aa). A Phosphothreonine; by MAPK8 modification is found at Thr278. A disordered region spans residues 329 to 395; sequence TTTTTSNMGI…KEGEQNQQTQ (67 aa). Low complexity predominate over residues 342–357; it reads TTSGSSGTNSQGQTPQ. Residues 358 to 379 show a composition bias toward polar residues; that stretch reads RVSGLQGSDALNIQQNQTSGGS. Residues 381 to 395 show a composition bias toward low complexity; that stretch reads QAGQQKEGEQNQQTQ. Position 453 is a phosphothreonine; by MAPK1 and MAPK3 (Thr453). The short motif at 462–470 is the 9aaTAD element; the sequence is VSWQTLQLQ. Ser491 is a glycosylation site (O-linked (GlcNAc) serine). Positions 496–610 are transactivation domain C (highly charged); the sequence is SSSNTTLTPI…REACTCPYCK (115 aa). A disordered region spans residues 567-598; that stretch reads LHGAGGDGIHDDTAGGEEGENSPDAQPQAGRR. Ser612 is subject to Phosphoserine; alternate. Ser612 is a glycosylation site (O-linked (GlcNAc) serine; alternate). Residues 619–785 are VZV IE62-binding; sequence DPGKKKQHIC…QSINISGNGF (167 aa). A C2H2-type 1 zinc finger spans residues 626–650; the sequence is HICHIQGCGKVYGKTSHLRAHLRWH. At Thr640 the chain carries Phosphothreonine; alternate. Thr640 is a glycosylation site (O-linked (GlcNAc) threonine; alternate). A glycan (O-linked (GlcNAc) serine; alternate) is linked at Ser641. Residue Ser641 is modified to Phosphoserine; by PKC/PRKCZ; alternate. Thr651 is subject to Phosphothreonine; by PKC/PRKCZ. A C2H2-type 2 zinc finger spans residues 656 to 680; that stretch reads FMCTWSYCGKRFTRSDELQRHKRTH. Thr668 bears the Phosphothreonine mark. Ser670 is modified (phosphoserine; by PKC/PRKCZ). At Thr681 the chain carries Phosphothreonine; by PKC/PRKCZ. The C2H2-type 3 zinc-finger motif lies at 686–708; the sequence is FACPECPKRFMRSDHLSKHIKTH. Ser698 and Ser702 each carry phosphoserine; alternate. O-linked (GlcNAc) serine; alternate glycans are attached at residues Ser698 and Ser702. Lys703 carries the N6-acetyllysine modification. The domain D stretch occupies residues 708–785; it reads HQNKKGGPGV…QSINISGNGF (78 aa). A Phosphothreonine; by MAPK1, MAPK3 and MAPK8 modification is found at Thr739.

It belongs to the Sp1 C2H2-type zinc-finger protein family. Interacts with ATF7IP, ATF7IP2, BAHD1, POGZ, HCFC1, AATF and PHC2. Interacts with HLTF; the interaction may be required for basal transcriptional activity of HLTF. Interacts (deacetylated form) with EP300; the interaction enhances gene expression. Interacts with HDAC1 and JUN. Interacts with ELF1; the interaction is inhibited by glycosylation of SP1. Interaction with NFYA; the interaction is inhibited by glycosylation of SP1. Interacts with ATF7IP and TBP. Interacts with MEIS2 isoform 4 and PBX1 isoform PBX1a. Interacts with EGR1. Interacts with SMARCA4/BRG1. Interacts with RNF112 in an oxidative stress-regulated manner. Interacts with ZBTB7A; ZBTB7A prevents the binding to GC-rich motifs in promoters and represses the transcriptional activity of SP1. Interacts with DDX3X; this interaction potentiates SP1-induced CDKN1A/WAF1/CIP1 transcription. Interacts with MSX1; the interaction may inhibit MSX1 autoinactivation. In terms of assembly, (Microbial infection) Interacts with varicella-zoster virus IE62 protein. As to quaternary structure, (Microbial infection) Interacts with SV40 VP2/3 proteins. Interacts with SV40 major capsid protein VP1; this interaction leads to a cooperativity between the 2 proteins in DNA binding. (Microbial infection) Interacts with HIV-1 Vpr; the interaction is inhibited by SP1 O-glycosylation. Phosphorylated on multiple serine and threonine residues. Phosphorylation is coupled to ubiquitination, sumoylation and proteolytic processing. Phosphorylation on Ser-59 enhances proteolytic cleavage. Phosphorylation on Ser-7 enhances ubiquitination and protein degradation. Hyperphosphorylation on Ser-101 in response to DNA damage has no effect on transcriptional activity. MAPK1/MAPK3-mediated phosphorylation on Thr-453 and Thr-739 enhances VEGF transcription but, represses FGF2-triggered PDGFR-alpha transcription. Also implicated in the repression of RECK by ERBB2. Hyperphosphorylated on Thr-278 and Thr-739 during mitosis by MAPK8 shielding SP1 from degradation by the ubiquitin-dependent pathway. Phosphorylated in the zinc-finger domain by calmodulin-activated PKCzeta. Phosphorylation on Ser-641 by PKCzeta is critical for TSA-activated LHR gene expression through release of its repressor, p107. Phosphorylation on Thr-668, Ser-670 and Thr-681 is stimulated by angiotensin II via the AT1 receptor inducing increased binding to the PDGF-D promoter. This phosphorylation is increased in injured artey wall. Ser-59 and Thr-681 can both be dephosphorylated by PP2A during cell-cycle interphase. Dephosphorylation on Ser-59 leads to increased chromatin association during interphase and increases the transcriptional activity. On insulin stimulation, sequentially glycosylated and phosphorylated on several C-terminal serine and threonine residues. In terms of processing, acetylated. Acetylation/deacetylation events affect transcriptional activity. Deacetylation leads to an increase in the expression of the 12(s)-lipooxygenase gene through recruitment of p300 to the promoter. Deacetylated by HDAC6 which leads to increased expression of ENG and positive regulation of angiogenesis. Post-translationally, ubiquitinated. Ubiquitination occurs on the C-terminal proteolytically-cleaved peptide and is triggered by phosphorylation. Sumoylated with SUMO1. Sumoylation modulates proteolytic cleavage of the N-terminal repressor domain. Sumoylation levels are attenuated during tumorigenesis. Phosphorylation mediates SP1 desumoylation. In terms of processing, proteolytic cleavage in the N-terminal repressor domain is prevented by sumoylation. The C-terminal cleaved product is susceptible to degradation. Post-translationally, O-glycosylated; Contains 8 N-acetylglucosamine side chains. Levels are controlled by insulin and the SP1 phosphorylation states. Insulin-mediated O-glycosylation locates SP1 to the nucleus, where it is sequentially deglycosylated and phosphorylated. O-glycosylation affects transcriptional activity through disrupting the interaction with a number of transcription factors including ELF1 and NFYA. Also inhibits interaction with the HIV1 promoter. Inhibited by peroxisomome proliferator receptor gamma (PPARgamma). Up-regulated in adenocarcinomas of the stomach (at protein level). Isoform 3 is ubiquitously expressed at low levels.

Its subcellular location is the nucleus. It is found in the cytoplasm. Functionally, transcription factor that can activate or repress transcription in response to physiological and pathological stimuli. Binds with high affinity to GC-rich motifs and regulates the expression of a large number of genes involved in a variety of processes such as cell growth, apoptosis, differentiation and immune responses. Highly regulated by post-translational modifications (phosphorylations, sumoylation, proteolytic cleavage, glycosylation and acetylation). Also binds the PDGFR-alpha G-box promoter. May have a role in modulating the cellular response to DNA damage. Implicated in chromatin remodeling. Plays an essential role in the regulation of FE65 gene expression. In complex with ATF7IP, maintains telomerase activity in cancer cells by inducing TERT and TERC gene expression. Isoform 3 is a stronger activator of transcription than isoform 1. Positively regulates the transcription of the core clock component BMAL1. Plays a role in the recruitment of SMARCA4/BRG1 on the c-FOS promoter. Plays a role in protecting cells against oxidative stress following brain injury by regulating the expression of RNF112. This is Transcription factor Sp1 (SP1) from Homo sapiens (Human).